The following is a 118-amino-acid chain: UPF0102 protein CMM_1377 (118 aa).

It belongs to the UPF0102 family.

The polypeptide is UPF0102 protein CMM_1377 (Clavibacter michiganensis subsp. michiganensis (strain NCPPB 382)).